The sequence spans 62 residues: Alpha-conotoxin-like Qc1.2 (62 aa).

The signal sequence occupies residues 1–21 (MGMRMMFTVFLLVALATTVAS). Positions 22–48 (FTLDRASNGRNAAADDKPSDWIALAIK) are excised as a propeptide. Position 49 is a pyrrolidone carboxylic acid (Gln-49). Disulfide bonds link Cys-50-Cys-56 and Cys-51-Cys-61.

The protein belongs to the conotoxin A superfamily. As to expression, expressed by the venom duct.

The protein localises to the secreted. Functionally, alpha-conotoxins bind to the nicotinic acetylcholine receptors (nAChR) and inhibit them. This synthetic peptide (10 uM) selectively, but weakly inhibits both rat neuronal alpha-3-beta-2/CHRNA3-CHRNB2 (63%) and alpha-3-beta-4/CHRNA3-CHRNB4 (37%) subtypes of nAChR. This Conus quercinus (Oak cone) protein is Alpha-conotoxin-like Qc1.2.